The sequence spans 153 residues: SsrA-binding protein (153 aa).

This sequence belongs to the SmpB family.

Its subcellular location is the cytoplasm. In terms of biological role, required for rescue of stalled ribosomes mediated by trans-translation. Binds to transfer-messenger RNA (tmRNA), required for stable association of tmRNA with ribosomes. tmRNA and SmpB together mimic tRNA shape, replacing the anticodon stem-loop with SmpB. tmRNA is encoded by the ssrA gene; the 2 termini fold to resemble tRNA(Ala) and it encodes a 'tag peptide', a short internal open reading frame. During trans-translation Ala-aminoacylated tmRNA acts like a tRNA, entering the A-site of stalled ribosomes, displacing the stalled mRNA. The ribosome then switches to translate the ORF on the tmRNA; the nascent peptide is terminated with the 'tag peptide' encoded by the tmRNA and targeted for degradation. The ribosome is freed to recommence translation, which seems to be the essential function of trans-translation. This Orientia tsutsugamushi (strain Boryong) (Rickettsia tsutsugamushi) protein is SsrA-binding protein.